We begin with the raw amino-acid sequence, 96 residues long: Protein Vpr (96 aa).

Residues 1-42 (MEQAPEDQGPQREPYNEWTLELLEELKSEAVRHFPRIWLHNL) are homooligomerization. Phosphoserine; by host is present on residues Ser79, Ser94, and Ser96.

Belongs to the HIV-1 VPR protein family. Homooligomer, may form homodimer. Interacts with p6-gag region of the Pr55 Gag precursor protein through a (Leu-X-X)4 motif near the C-terminus of the P6gag protein. Interacts with host UNG. May interact with host RAD23A/HHR23A. Interacts with host VPRBP/DCAF1, leading to hijack the CUL4A-RBX1-DDB1-DCAF1/VPRBP complex, mediating ubiquitination of host proteins such as TERT and ZGPAT and arrest of the cell cycle in G2 phase. Phosphorylated on several residues by host. These phosphorylations regulate VPR activity for the nuclear import of the HIV-1 pre-integration complex.

It is found in the virion. Its subcellular location is the host nucleus. It localises to the host extracellular space. In terms of biological role, during virus replication, may deplete host UNG protein, and incude G2-M cell cycle arrest. Acts by targeting specific host proteins for degradation by the 26S proteasome, through association with the cellular CUL4A-DDB1 E3 ligase complex by direct interaction with host VPRPB/DCAF-1. Cell cycle arrest reportedly occurs within hours of infection and is not blocked by antiviral agents, suggesting that it is initiated by the VPR carried into the virion. Additionally, VPR induces apoptosis in a cell cycle dependent manner suggesting that these two effects are mechanistically linked. Detected in the serum and cerebrospinal fluid of AIDS patient, VPR may also induce cell death to bystander cells. Functionally, during virus entry, plays a role in the transport of the viral pre-integration (PIC) complex to the host nucleus. This function is crucial for viral infection of non-dividing macrophages. May act directly at the nuclear pore complex, by binding nucleoporins phenylalanine-glycine (FG)-repeat regions. The chain is Protein Vpr from Homo sapiens (Human).